Reading from the N-terminus, the 336-residue chain is CST complex subunit STN1 (336 aa).

Residues 49–126 (VDILGTVVCV…EVVASIFYKV (78 aa)) constitute a DNA-binding region (OB). Winged helix-turn-helix (wHTH) stretches follow at residues 162–263 (QSQE…YVTD) and 264–336 (HDKE…YTAF).

It belongs to the CTC1 family. In terms of assembly, component of the CST complex.

It is found in the nucleus. The protein localises to the chromosome. It localises to the telomere. In terms of biological role, component of the CST complex proposed to act as a specialized replication factor promoting DNA replication under conditions of replication stress or natural replication barriers such as the telomere duplex. The CST complex binds single-stranded DNA with high affinity in a sequence-independent manner, while isolated subunits bind DNA with low affinity by themselves. Initially the CST complex has been proposed to protect telomeres from DNA degradation. However, the CST complex has been shown to be involved in several aspects of telomere replication. The sequence is that of CST complex subunit STN1 from Aquarana catesbeiana (American bullfrog).